A 466-amino-acid chain; its full sequence is Amidase (466 aa).

Residues lysine 79 and serine 148 each act as charge relay system in the active site. The tract at residues 128–152 (YGRITPKSRNPRDPGRTPGGSSGGS) is disordered. Catalysis depends on serine 172, which acts as the Acyl-ester intermediate.

This sequence belongs to the amidase family.

It catalyses the reaction a monocarboxylic acid amide + H2O = a monocarboxylate + NH4(+). This Pseudomonas putida (Arthrobacter siderocapsulatus) protein is Amidase.